Consider the following 398-residue polypeptide: Putative defective protein IntQ (398 aa).

Residues 51–146 (LTIKELAEKF…NLNAVFQFGV (96 aa)) form the Core-binding (CB) domain. A Tyr recombinase domain is found at 167 to 378 (TIPDPLSREE…SENNNAQVAL (212 aa)). Catalysis depends on residues R202, K236, R331, and H354. Y364 serves as the catalytic O-(3'-phospho-DNA)-tyrosine intermediate.

This sequence belongs to the 'phage' integrase family.

Its function is as follows. Integrase is necessary for integration of the phage into the host genome by site-specific recombination. In conjunction with excisionase, integrase is also necessary for excision of the prophage from the host genome. The protein is Putative defective protein IntQ (intQ) of Escherichia coli (strain K12).